The primary structure comprises 309 residues: GTP cyclohydrolase FolE2 (309 aa).

The protein belongs to the GTP cyclohydrolase IV family.

It carries out the reaction GTP + H2O = 7,8-dihydroneopterin 3'-triphosphate + formate + H(+). It participates in cofactor biosynthesis; 7,8-dihydroneopterin triphosphate biosynthesis; 7,8-dihydroneopterin triphosphate from GTP: step 1/1. In terms of biological role, converts GTP to 7,8-dihydroneopterin triphosphate. The sequence is that of GTP cyclohydrolase FolE2 from Serratia proteamaculans (strain 568).